Reading from the N-terminus, the 103-residue chain is Small ribosomal subunit protein uS10 (103 aa).

This sequence belongs to the universal ribosomal protein uS10 family. Part of the 30S ribosomal subunit.

In terms of biological role, involved in the binding of tRNA to the ribosomes. The chain is Small ribosomal subunit protein uS10 from Campylobacter fetus subsp. fetus (strain 82-40).